Reading from the N-terminus, the 427-residue chain is Adenylosuccinate synthetase (427 aa).

GTP contacts are provided by residues 12-18 (GDEGKGK) and 40-42 (GHT). Residue D13 is the Proton acceptor of the active site. Residues D13 and G40 each contribute to the Mg(2+) site. IMP contacts are provided by residues 13–16 (DEGK), 38–41 (NAGH), T127, R141, Q222, T237, and R301. The active-site Proton donor is H41. 297–303 (VVTKRPR) is a binding site for substrate. Residues R303, 329 to 331 (SLD), and 411 to 413 (AVG) contribute to the GTP site.

The protein belongs to the adenylosuccinate synthetase family. Homodimer. Requires Mg(2+) as cofactor.

The protein resides in the cytoplasm. It catalyses the reaction IMP + L-aspartate + GTP = N(6)-(1,2-dicarboxyethyl)-AMP + GDP + phosphate + 2 H(+). It participates in purine metabolism; AMP biosynthesis via de novo pathway; AMP from IMP: step 1/2. In terms of biological role, plays an important role in the de novo pathway of purine nucleotide biosynthesis. Catalyzes the first committed step in the biosynthesis of AMP from IMP. In Leuconostoc citreum (strain KM20), this protein is Adenylosuccinate synthetase.